The primary structure comprises 256 residues: Type III pantothenate kinase (256 aa).

6-13 contacts ATP; that stretch reads DVGNTNIV. Substrate is bound at residue 107–110; the sequence is GADR. D109 serves as the catalytic Proton acceptor. Residue D129 coordinates K(+). T132 contacts ATP. T184 is a binding site for substrate.

This sequence belongs to the type III pantothenate kinase family. Homodimer. NH4(+) serves as cofactor. It depends on K(+) as a cofactor.

Its subcellular location is the cytoplasm. The enzyme catalyses (R)-pantothenate + ATP = (R)-4'-phosphopantothenate + ADP + H(+). It participates in cofactor biosynthesis; coenzyme A biosynthesis; CoA from (R)-pantothenate: step 1/5. Its function is as follows. Catalyzes the phosphorylation of pantothenate (Pan), the first step in CoA biosynthesis. The polypeptide is Type III pantothenate kinase (Pelotomaculum thermopropionicum (strain DSM 13744 / JCM 10971 / SI)).